The following is a 274-amino-acid chain: Large ribosomal subunit protein uL2cz/uL2cy (274 aa).

Disordered regions lie at residues 1–21 and 225–254; these read MAIHLYKTSTPSTRNGAVDSQ and PVDHPHGGGEGRAPIGRKKPVTPWGYPALG.

This sequence belongs to the universal ribosomal protein uL2 family. Part of the 50S ribosomal subunit.

The protein resides in the plastid. Its subcellular location is the chloroplast. The chain is Large ribosomal subunit protein uL2cz/uL2cy (rpl2-A) from Draba nemorosa (Woodland whitlowgrass).